Consider the following 399-residue polypeptide: Cytohesin-3 (399 aa).

Residues 14–61 (EDLSLEEREELLDIRRRKKELIDDIERLKYEIAEVMTEIDNLTSVEES) adopt a coiled-coil conformation. Residues 77-206 (FNMDPKKGIQ…IIMLNTSLHN (130 aa)) form the SEC7 domain. The 117-residue stretch at 264 to 380 (NPDREGWLLK…WMKSIKASIS (117 aa)) folds into the PH domain. A 1,2-diacyl-sn-glycero-3-phospho-(1D-myo-inositol-3,4,5-trisphosphate) contacts are provided by residues 273–280 (KLGGRVKT), Arg284, Tyr295, Arg305, and Asn354. Residues 391–399 (RKRRIANKK) form a C-terminal autoinhibitory region region.

Interacts with TAMALIN. Interacts with FRMD4A. Interacts with FRMD4B.

It localises to the cytoplasm. Its subcellular location is the cytosol. It is found in the cell membrane. The protein localises to the cell junction. The protein resides in the adherens junction. It localises to the tight junction. Its function is as follows. Promotes guanine-nucleotide exchange on ARF1. Promotes the activation of ARF factors through replacement of GDP with GTP. Plays a role in the epithelial polarization. This Mus musculus (Mouse) protein is Cytohesin-3 (Cyth3).